The sequence spans 434 residues: Glutamate-1-semialdehyde 2,1-aminomutase 1 (434 aa).

Lys268 is modified (N6-(pyridoxal phosphate)lysine).

The protein belongs to the class-III pyridoxal-phosphate-dependent aminotransferase family. HemL subfamily. In terms of assembly, homodimer. It depends on pyridoxal 5'-phosphate as a cofactor.

It localises to the cytoplasm. The catalysed reaction is (S)-4-amino-5-oxopentanoate = 5-aminolevulinate. It participates in porphyrin-containing compound metabolism; protoporphyrin-IX biosynthesis; 5-aminolevulinate from L-glutamyl-tRNA(Glu): step 2/2. This Shouchella clausii (strain KSM-K16) (Alkalihalobacillus clausii) protein is Glutamate-1-semialdehyde 2,1-aminomutase 1.